We begin with the raw amino-acid sequence, 836 residues long: Protein O-mannosyl-transferase TMTC2 (836 aa).

The helical transmembrane segment at 1 to 21 (MIAELVSSALGLALYLNTLSA) threads the bilayer. At 22–84 (DFCYDDSRAI…LNHAIGGLNP (63 aa)) the chain is on the extracellular side. Residues 85-105 (WSYHLVNVLLHAAVTGLFTSF) form a helical membrane-spanning segment. Residues 106–107 (SK) lie on the Cytoplasmic side of the membrane. Residues 108–128 (ILLGDGYWTFMAGLMFASHPI) traverse the membrane as a helical segment. The Extracellular portion of the chain corresponds to 129–132 (HTEA). The helical transmembrane segment at 133–153 (VAGIVGRADVGASLFFLLSLL) threads the bilayer. The Cytoplasmic portion of the chain corresponds to 154 to 162 (CYIKHCSTR). The next 2 membrane-spanning stretches (helical) occupy residues 163–184 (GYSA…CSML) and 185–204 (WKEQ…VFVF). Residues 205–220 (HRLKIKQILPTIYKRK) lie on the Cytoplasmic side of the membrane. A helical membrane pass occupies residues 221–241 (NLSLFLSISLLIFWGSSLLGA). Residues 242-312 (RLYWMGNKPP…KTVCDWRNLH (71 aa)) are Extracellular-facing. The helical transmembrane segment at 313-333 (TVAFYTGLLLLAYYGLKSPSV) threads the bilayer. Over 334–399 (DRECNGKTVT…TENIVVLSLS (66 aa)) the chain is Cytoplasmic. The chain crosses the membrane as a helical span at residues 400–420 (LLIIPFVPATNLFFYVGFVIA). Topologically, residues 421–422 (ER) are extracellular. Residues 423 to 443 (VLYIPSMGFCLLITVGARALY) traverse the membrane as a helical segment. Topologically, residues 444–449 (VKVQKR) are cytoplasmic. Residues 450-470 (FLKSLIFYATATLIVFYGLKT) form a helical membrane-spanning segment. Topologically, residues 471-836 (AIRNGDWQNE…EKQGLKTSKT (366 aa)) are extracellular. TPR repeat units follow at residues 493–526 (AKAW…RSNM), 527–560 (ADML…RPTL), 561–594 (ASAY…PDEN), 606–639 (TSCL…MPRQ), 643–676 (QSLY…KTDH), 677–710 (IPAH…DPTK), 711–744 (GNCY…DSTE), 745–778 (FDVV…RPNY), and 779–812 (PAAL…KPDD).

Belongs to the TMTC family.

It localises to the membrane. It is found in the endoplasmic reticulum. It carries out the reaction a di-trans,poly-cis-dolichyl beta-D-mannosyl phosphate + L-seryl-[protein] = 3-O-(alpha-D-mannosyl)-L-seryl-[protein] + a di-trans,poly-cis-dolichyl phosphate + H(+). It catalyses the reaction a di-trans,poly-cis-dolichyl beta-D-mannosyl phosphate + L-threonyl-[protein] = 3-O-(alpha-D-mannosyl)-L-threonyl-[protein] + a di-trans,poly-cis-dolichyl phosphate + H(+). It participates in protein modification; protein glycosylation. Transfers mannosyl residues to the hydroxyl group of serine or threonine residues. The 4 members of the TMTC family are O-mannosyl-transferases dedicated primarily to the cadherin superfamily, each member seems to have a distinct role in decorating the cadherin domains with O-linked mannose glycans at specific regions. Also acts as O-mannosyl-transferase on other proteins such as PDIA3. The polypeptide is Protein O-mannosyl-transferase TMTC2 (Homo sapiens (Human)).